We begin with the raw amino-acid sequence, 73 residues long: Accessory secretory protein Asp5 (73 aa).

A signal peptide spans 1-30 (MQKLLLILTILLALILITLVISLPRENQQF). Residues 52–72 (IILLIVSILLFLTLIFYMIQT) traverse the membrane as a helical segment.

In terms of assembly, part of the accessory SecA2/SecY2 protein translocation apparatus required to export cell wall protein GspB.

Its subcellular location is the cell membrane. In terms of biological role, part of the accessory SecA2/SecY2 system specifically required to export GspB, a serine-rich repeat cell wall protein encoded upstream in the same operon. The polypeptide is Accessory secretory protein Asp5 (asp5) (Streptococcus gordonii).